The following is a 152-amino-acid chain: Natriuretic peptides A (152 aa).

Residues 1 to 24 form the signal peptide; that stretch reads MGSSAITVSFLLFLAFQLPGQTGA. Propeptides lie at residues 25 to 122 and 92 to 102; these read NPVY…TAPR and EGGVLGRGPWE. The interval 58–101 is disordered; it reads PSQVLSEQNEEAGAPLSPLSEMPPWMGEVNPAQREGGVLGRGPW. A Phosphoserine modification is found at serine 128. An intrachain disulfide couples cysteine 129 to cysteine 145. The tract at residues 146 to 150 is important for degradation of atrial natriuretic peptide by IDE; the sequence is NSFRY.

This sequence belongs to the natriuretic peptide family. In terms of assembly, homodimer; disulfide-linked antiparallel dimer. In terms of processing, the precursor molecule is proteolytically cleaved by CORIN at Arg-122 to produce the atrial natriuretic peptide. Undergoes further proteolytic cleavage by unknown proteases to give rise to long-acting natriuretic peptide, vessel dilator and kaliuretic peptide. Additional processing gives rise to the auriculin and atriopeptin peptides. In the kidneys, alternative processing by an unknown protease results in the peptide urodilatin. Cleavage by MME initiates degradation of the factor and thereby regulates its activity. Degradation by IDE results in reduced activation of NPR1 (in vitro). During IDE degradation, the resulting products can temporarily stimulate NPR2 to produce cGMP, before the fragments are completely degraded and inactivated by IDE (in vitro). Post-translationally, degraded by IDE. In terms of processing, phosphorylation on Ser-128 decreases vasorelaxant activity.

The protein localises to the secreted. Its subcellular location is the perikaryon. It localises to the cell projection. In terms of biological role, hormone that plays a key role in mediating cardio-renal homeostasis, and is involved in vascular remodeling and regulating energy metabolism. Acts by specifically binding and stimulating NPR1 to produce cGMP, which in turn activates effector proteins, such as PRKG1, that drive various biological responses. Regulates vasodilation, natriuresis, diuresis and aldosterone synthesis and is therefore essential for regulating blood pressure, controlling the extracellular fluid volume and maintaining the fluid-electrolyte balance. Also involved in inhibiting cardiac remodeling and cardiac hypertrophy by inducing cardiomyocyte apoptosis and attenuating the growth of cardiomyocytes and fibroblasts. Plays a role in female pregnancy by promoting trophoblast invasion and spiral artery remodeling in uterus, and thus prevents pregnancy-induced hypertension. In adipose tissue, acts in various cGMP- and PKG-dependent pathways to regulate lipid metabolism and energy homeostasis. This includes up-regulating lipid metabolism and mitochondrial oxygen utilization by activating the AMP-activated protein kinase (AMPK), and increasing energy expenditure by acting via MAPK11 to promote the UCP1-dependent thermogenesis of brown adipose tissue. Binds the clearance receptor NPR3 which removes the hormone from circulation. May have a role in cardio-renal homeostasis through regulation of natriuresis, diuresis, vasodilation, and inhibiting aldosterone synthesis. In vitro, promotes the production of cGMP and induces vasodilation. May promote natriuresis, at least in part, by enhancing prostaglandin E2 synthesis resulting in the inhibition of renal Na+-K+-ATPase. However reports on the involvement of this peptide in mammal blood volume and blood pressure homeostasis are conflicting; according to a report, in vivo it is not sufficient to activate cGMP and does not inhibit collecting duct transport nor effect diuresis and natriuresis. Appears to bind to specific receptors that are distinct from the receptors bound by atrial natriuretic peptide and vessel dilator. Possibly enhances protein excretion in urine by decreasing proximal tubular protein reabsorption. Functionally, may have a role in cardio-renal homeostasis through regulation of natriuresis, diuresis, and vasodilation. In vitro, promotes the production of cGMP and induces vasodilation. May promote natriuresis, at least in part, by enhancing prostaglandin E2 synthesis resulting in the inhibition of renal Na+-K+-ATPase. However reports on the involvement of this peptide in mammal blood volume and blood pressure homeostasis are conflicting; according to a report it is not sufficient to activate cGMP and does not inhibit collecting duct transport nor effect diuresis and natriuresis. Appears to bind to specific receptors that are distinct from the receptors bound by the atrial natriuretic and long-acting natriuretic peptides. Possibly functions in protein excretion in urine by maintaining the integrity of the proximal tubules and enhancing protein excretion by decreasing proximal tubular protein reabsorption. Its function is as follows. May have a role in cardio-renal homeostasis through regulation of diuresis and inhibiting aldosterone synthesis. In vitro, promotes the production of cGMP and induces vasodilation. May promote natriuresis, at least in part, by enhancing prostaglandin E2 synthesis resulting in the inhibition of renal Na+-K+-ATPase. May have a role in potassium excretion but not sodium excretion (natriuresis). Possibly enhances protein excretion in urine by decreasing proximal tubular protein reabsorption. In terms of biological role, hormone produced in the kidneys that appears to be important for maintaining cardio-renal homeostasis. Mediates vasodilation, natriuresis and diuresis primarily in the renal system, in order to maintain the extracellular fluid volume and control the fluid-electrolyte balance. Specifically binds and stimulates cGMP production by renal transmembrane receptors, likely NPR1. Urodilatin not ANP, may be the natriuretic peptide responsible for the regulation of sodium and water homeostasis in the kidney. May have a role in cardio-renal homeostasis through regulation of natriuresis and vasodilation. In vivo promotes natriuresis and in vitro, vasodilates renal artery strips. Functionally, may have a role in cardio-renal homeostasis through regulation of regulation of natriuresis and vasodilation. In vivo promotes natriuresis. In vitro, vasodilates intestinal smooth muscle but not smooth muscle strips. Its function is as follows. May have a role in cardio-renal homeostasis through regulation of natriuresis and vasodilation. In vivo promotes natriuresis. In vitro, selectively vasodilates intestinal and vascular smooth muscle strips. In terms of biological role, may have a role in cardio-renal homeostasis through regulation of natriuresis and vasodilation. In vivo promotes natriuresis. In vitro, selectively vasodilates intestinal smooth muscle but not vascular smooth muscle strips. This chain is Natriuretic peptides A (NPPA), found in Bos taurus (Bovine).